A 257-amino-acid chain; its full sequence is Leucine-rich repeat-containing protein 3 (257 aa).

Residues 1–32 (MGTVRPPRPSLLLVSTRESCLFLLFCLHLGAA) form the signal peptide. The LRRNT domain occupies 33-64 (CPQPCRCPDHAGAVAVFCSLRGLQEVPEDIPA). 4 LRR repeats span residues 65 to 86 (NTVLLKLDANKISHLPDGAFQH), 89 to 110 (RLRELDLSHNAIEAIGSATFAG), 114 to 135 (GLRLLDLSYNRIQRIPKDALGK), and 136 to 157 (LSAKIRLSHNPLHCECALQEAL). Residues 205 to 225 (VAMLVTMFGWFAMVIAYVVYY) form a helical membrane-spanning segment.

This sequence belongs to the LRRC3 family. As to expression, widely expressed; detected in testis, lung, small intestine, breast, brain, heart, bone marrow, placenta, colon, fetal brain, liver, fetal liver, thymus, salivary gland, spinal cord, spleen, trachea and adrenal gland.

The protein resides in the membrane. In Homo sapiens (Human), this protein is Leucine-rich repeat-containing protein 3 (LRRC3).